We begin with the raw amino-acid sequence, 214 residues long: MNTLQKGFTLIELMIVIAIVGILAAVALPAYQDYTARAQVSEAILLAEGQKSAVTEYYLNHGIWPENNPAGVASPASDIKGKYVQSVTVANGVVTAQMKSDGVNKEIKNKKLSLWARREAGSVKWFCGQPVTRDNAGTDAVTADTTGKDKEIDTKHLPSTCRCFQIGSVKWFCGQPVTRDNAGTDAVTADTTGKDKEIDTKHLPSTCRDKSSAE.

A propeptide spans 1–7 (leader sequence); sequence MNTLQKG. Phe-8 bears the N-methylphenylalanine mark. The chain crosses the membrane as a helical span at residues 8–28; that stretch reads FTLIELMIVIAIVGILAAVAL. Cys-127 and Cys-161 are disulfide-bonded. Residues 182 to 214 form a disordered region; sequence AGTDAVTADTTGKDKEIDTKHLPSTCRDKSSAE. A compositionally biased stretch (basic and acidic residues) spans 192-214; the sequence is TGKDKEIDTKHLPSTCRDKSSAE.

Belongs to the N-Me-Phe pilin family. In terms of assembly, the pili are polar flexible filaments of about 5.4 nanometers diameter and 2.5 micrometers average length; they consist of only a single polypeptide chain arranged in a helical configuration of five subunits per turn in the assembled pilus.

It localises to the fimbrium. Its subcellular location is the membrane. In terms of biological role, major component of the type IV pilus (T4P) that plays a role in cellular adherence, microcolony formation, resistance to neutrophil mediated killing, twitching motility as well as transformation. Mediates the attachment and the formation of bacterial microcolonies on host epithelial cells. Mechanistically, pili retractation induces host NF-kappa-B activation in infected cells, which is temporally associated with the formation of gonococcal microcolonies. The chain is Type IV major pilin protein PilE1 (pilE1) from Neisseria gonorrhoeae.